We begin with the raw amino-acid sequence, 495 residues long: Thioredoxin reductase SEP1 (495 aa).

FAD is bound at residue 37 to 54 (DFVKPSPPGTTWGLGGTC). Cys-54 and Cys-59 are disulfide-bonded. The Proton acceptor role is filled by His-468. A cross-link (cysteinyl-selenocysteine (Cys-Sec)) is located at residues 493–494 (CU). A non-standard amino acid (selenocysteine) is located at residue Sec-494.

The protein belongs to the class-I pyridine nucleotide-disulfide oxidoreductase family. In terms of assembly, homodimer. FAD is required as a cofactor. In terms of processing, the N-terminus is blocked.

The enzyme catalyses [thioredoxin]-dithiol + NADP(+) = [thioredoxin]-disulfide + NADPH + H(+). Activity was very low in selenium-depleted cells, but increased 4-fold to the same level as in selenium-sufficient cells for 70 hours after the addition of 10 nm selenite. The chain is Thioredoxin reductase SEP1 (SEP1) from Emiliania huxleyi (Coccolithophore).